A 344-amino-acid polypeptide reads, in one-letter code: N-acetyl-gamma-glutamyl-phosphate reductase (344 aa).

Residue Cys150 is part of the active site.

Belongs to the NAGSA dehydrogenase family. Type 1 subfamily.

The protein localises to the cytoplasm. It catalyses the reaction N-acetyl-L-glutamate 5-semialdehyde + phosphate + NADP(+) = N-acetyl-L-glutamyl 5-phosphate + NADPH + H(+). It functions in the pathway amino-acid biosynthesis; L-arginine biosynthesis; N(2)-acetyl-L-ornithine from L-glutamate: step 3/4. Catalyzes the NADPH-dependent reduction of N-acetyl-5-glutamyl phosphate to yield N-acetyl-L-glutamate 5-semialdehyde. The protein is N-acetyl-gamma-glutamyl-phosphate reductase of Pseudomonas putida (strain ATCC 700007 / DSM 6899 / JCM 31910 / BCRC 17059 / LMG 24140 / F1).